The following is a 747-amino-acid chain: Protein neuralized (747 aa).

Positions 97–251 constitute an NHR 1 domain; it reads PLQFHTVHGD…NCTGIEFLDA (155 aa). A compositionally biased stretch (low complexity) spans 280–292; sequence LPQQQQQLPQQQL. Residues 280–309 are disordered; the sequence is LPQQQQQLPQQQLTAHHPLQQSRRSLPGGT. One can recognise an NHR 2 domain in the interval 359–514; it reads PVPFHITKGR…STQSLRMFRQ (156 aa). The RING-type zinc-finger motif lies at 694 to 735; it reads CTICYENPIDSVLYMCGHMCMCYDCAIEQWRGVGGGQCPLCR.

The protein localises to the nucleus. In terms of biological role, involved in neurogenesis. Interacts with other neurogenic proteins in the specification of the neuroblast versus epidermoblast cell fate. This chain is Protein neuralized (neur), found in Drosophila virilis (Fruit fly).